The sequence spans 1040 residues: Eukaryotic translation initiation factor 3 subunit A (1040 aa).

Positions 92–121 form a coiled coil; sequence LKKFIELAEKKVTEAQTKADEIQSSLESAA. Residues 339–523 form the PCI domain; sequence MTKAASFVLL…GVLTFDSDVF (185 aa). A coiled-coil region spans residues 608–906; that stretch reads RVIIEKKKEA…AEARRAARKA (299 aa). Composition is skewed to basic and acidic residues over residues 617–632 and 795–901; these read AATD…EETR and EVSE…EARR. Disordered regions lie at residues 617-641 and 795-1040; these read AATD…QQLQ and EVSE…QQNQ. 4 stretches are compositionally biased toward low complexity: residues 908-917, 945-955, 978-993, and 1004-1018; these read LEPAAPAARP, KEAAGGAAPEA, SGSS…NGAP, and SSSS…TPGS.

It belongs to the eIF-3 subunit A family. In terms of assembly, component of the eukaryotic translation initiation factor 3 (eIF-3) complex.

It localises to the cytoplasm. Its function is as follows. RNA-binding component of the eukaryotic translation initiation factor 3 (eIF-3) complex, which is involved in protein synthesis of a specialized repertoire of mRNAs and, together with other initiation factors, stimulates binding of mRNA and methionyl-tRNAi to the 40S ribosome. The eIF-3 complex specifically targets and initiates translation of a subset of mRNAs involved in cell proliferation. This chain is Eukaryotic translation initiation factor 3 subunit A (tif32), found in Aspergillus terreus (strain NIH 2624 / FGSC A1156).